Reading from the N-terminus, the 951-residue chain is Protocadherin-20 (951 aa).

An N-terminal signal peptide occupies residues 1-60 (MRGRGNARSSQALGVSWCPATWHPRLDMGRLHRPRSSTSYRNLPHLFLFFLFVGPFSCLG). Residues 61–890 (SYSRATELLY…VESVSCMPTL (830 aa)) lie on the Extracellular side of the membrane. Cadherin domains lie at 64-209 (RATE…APQF), 210-320 (PVSQ…CPLF), 321-535 (TDSQ…APIF), 536-639 (LQPL…SPRF), 640-742 (INKD…PPLV), and 746-863 (QSNM…EPEI). N-linked (GlcNAc...) asparagine glycosylation is present at Asn135. Asn326 and Asn332 each carry an N-linked (GlcNAc...) asparagine glycan. Residues Asn680, Asn748, Asn803, Asn844, and Asn849 are each glycosylated (N-linked (GlcNAc...) asparagine). A helical membrane pass occupies residues 891–911 (VALSVISLGSITLVTGMGIYI). The Cytoplasmic portion of the chain corresponds to 912–951 (CLRKGEKHPREDENLEVQIPLKGKIDLHMRERKPMDISNI).

It localises to the cell membrane. Its function is as follows. Potential calcium-dependent cell-adhesion protein. This is Protocadherin-20 (PCDH20) from Homo sapiens (Human).